The chain runs to 631 residues: Probable sulfate transporter 3.3 (631 aa).

Residues 1-69 (MEVHKVVAPP…EYSFSLLKSD (69 aa)) lie on the Cytoplasmic side of the membrane. Residues 70-90 (VVSGLTIASLAIPQGISYAKL) traverse the membrane as a helical segment. The Extracellular segment spans residues 91-92 (AN). The chain crosses the membrane as a helical span at residues 93–113 (LPPIVGLYSSFVPPLVYAVLG). Over 114–117 (SSRD) the chain is Cytoplasmic. A helical transmembrane segment spans residues 118-138 (LAVGPVSIASLILGSMLRQQV). The Extracellular portion of the chain corresponds to 139 to 144 (SPVDDP). The chain crosses the membrane as a helical span at residues 145–165 (VLFLQLAFSSTFFAGLFQASL). Residues 166 to 171 (GILRLG) are Cytoplasmic-facing. The chain crosses the membrane as a helical span at residues 172–192 (FIIDFLSKATLIGFMGGAAII). Topologically, residues 193-223 (VSLQQLKGLLGITHFTKHMSVVPVLSSVFQH) are extracellular. The helical transmembrane segment at 224–244 (TNEWSWQTIVMGVCFLLFLLS) threads the bilayer. Over 245–256 (TRHLSMKKPKLF) the chain is Cytoplasmic. Residues 257-277 (WVSAGAPLLSVIVSTLLVFVF) traverse the membrane as a helical segment. At 278–309 (RAERHGISVIGKLPEGLNPPSWNMLQFHGSHL) the chain is on the extracellular side. Residues 310-330 (ALVAKTGLVTGIVSLTEGIAV) form a helical membrane-spanning segment. Topologically, residues 331-347 (GRTFAALKNYHVDGNKE) are cytoplasmic. Residues 348–368 (MIAIGLMNVVGSATSCYVTTG) traverse the membrane as a helical segment. Over 369 to 384 (AFSRSAVNNNAGAKTA) the chain is Extracellular. The helical transmembrane segment at 385-405 (VSNIVMSVTVMVTLLFLMPLF) threads the bilayer. Residues 406-410 (EYTPN) lie on the Cytoplasmic side of the membrane. Residues 411–431 (VVLGAIIVTAVIGLIDLPAAC) form a helical membrane-spanning segment. Over 432–441 (HIWKIDKFDF) the chain is Extracellular. Residues 442–462 (LVMLCAFFGVIFLSVQNGLAI) traverse the membrane as a helical segment. Over 463–631 (AVGLSLFKIL…SLKGPSLSNV (169 aa)) the chain is Cytoplasmic. The STAS domain maps to 497 to 621 (HYKEAQRIPG…LTVAEAVASL (125 aa)).

This sequence belongs to the SLC26A/SulP transporter (TC 2.A.53) family. In terms of tissue distribution, expressed only in leaves.

It localises to the membrane. H(+)/sulfate cotransporter that may play a role in the regulation of sulfate assimilation. This chain is Probable sulfate transporter 3.3 (SULTR3;3), found in Arabidopsis thaliana (Mouse-ear cress).